The following is a 776-amino-acid chain: Endonuclease MutS2 (776 aa).

ATP is bound at residue 328-335; that stretch reads GPNTGGKT. A Smr domain is found at 701–776; sequence LDLRGKRYEE…GSGATIVTFK (76 aa).

The protein belongs to the DNA mismatch repair MutS family. MutS2 subfamily. As to quaternary structure, homodimer. Binds to stalled ribosomes, contacting rRNA.

In terms of biological role, endonuclease that is involved in the suppression of homologous recombination and thus may have a key role in the control of bacterial genetic diversity. Acts as a ribosome collision sensor, splitting the ribosome into its 2 subunits. Detects stalled/collided 70S ribosomes which it binds and splits by an ATP-hydrolysis driven conformational change. Acts upstream of the ribosome quality control system (RQC), a ribosome-associated complex that mediates the extraction of incompletely synthesized nascent chains from stalled ribosomes and their subsequent degradation. Probably generates substrates for RQC. The sequence is that of Endonuclease MutS2 from Streptococcus mutans serotype c (strain ATCC 700610 / UA159).